Reading from the N-terminus, the 173-residue chain is Putative metal-dependent hydrolase BCG9842_B2589 (173 aa).

Zn(2+)-binding residues include His65, His156, and His160.

Belongs to the metal hydrolase YfiT family. In terms of assembly, homodimer. The cofactor is Zn(2+).

Its subcellular location is the cytoplasm. Possible metal-dependent hydrolase. In Bacillus cereus (strain G9842), this protein is Putative metal-dependent hydrolase BCG9842_B2589.